A 183-amino-acid polypeptide reads, in one-letter code: ATP synthase subunit b, chloroplastic (183 aa).

Residues 27 to 49 (LATNLINLTVVVGVLIFFGKGVL) form a helical membrane-spanning segment.

The protein belongs to the ATPase B chain family. F-type ATPases have 2 components, F(1) - the catalytic core - and F(0) - the membrane proton channel. F(1) has five subunits: alpha(3), beta(3), gamma(1), delta(1), epsilon(1). F(0) has four main subunits: a(1), b(1), b'(1) and c(10-14). The alpha and beta chains form an alternating ring which encloses part of the gamma chain. F(1) is attached to F(0) by a central stalk formed by the gamma and epsilon chains, while a peripheral stalk is formed by the delta, b and b' chains.

The protein resides in the plastid. It is found in the chloroplast thylakoid membrane. Functionally, f(1)F(0) ATP synthase produces ATP from ADP in the presence of a proton or sodium gradient. F-type ATPases consist of two structural domains, F(1) containing the extramembraneous catalytic core and F(0) containing the membrane proton channel, linked together by a central stalk and a peripheral stalk. During catalysis, ATP synthesis in the catalytic domain of F(1) is coupled via a rotary mechanism of the central stalk subunits to proton translocation. In terms of biological role, component of the F(0) channel, it forms part of the peripheral stalk, linking F(1) to F(0). This chain is ATP synthase subunit b, chloroplastic, found in Hordeum vulgare (Barley).